The primary structure comprises 221 residues: uncharacterized protein (221 aa).

The first 26 residues, 1–26 (MVRLVPRAFAATVALLAAGFSPATAS), serve as a signal peptide directing secretion.

This is an uncharacterized protein from Mycobacterium tuberculosis (strain ATCC 25618 / H37Rv).